The primary structure comprises 663 residues: Transketolase 2 (663 aa).

H25 serves as a coordination point for substrate. Thiamine diphosphate-binding positions include H65 and 113 to 115 (GPL). Position 154 (D154) interacts with Mg(2+). The thiamine diphosphate site is built by G155 and N184. Residues N184 and I186 each coordinate Mg(2+). The substrate site is built by H259, R356, and S383. Position 259 (H259) interacts with thiamine diphosphate. The active-site Proton donor is E410. F436 is a binding site for thiamine diphosphate. Residues H460, D468, and R519 each contribute to the substrate site.

It belongs to the transketolase family. As to quaternary structure, homodimer. It depends on Mg(2+) as a cofactor. The cofactor is Ca(2+). Mn(2+) is required as a cofactor. Requires Co(2+) as cofactor. Thiamine diphosphate serves as cofactor.

The catalysed reaction is D-sedoheptulose 7-phosphate + D-glyceraldehyde 3-phosphate = aldehydo-D-ribose 5-phosphate + D-xylulose 5-phosphate. Catalyzes the transfer of a two-carbon ketol group from a ketose donor to an aldose acceptor, via a covalent intermediate with the cofactor thiamine pyrophosphate. The protein is Transketolase 2 (tkt2) of Aliivibrio fischeri (strain ATCC 700601 / ES114) (Vibrio fischeri).